Consider the following 143-residue polypeptide: Ribosomal RNA large subunit methyltransferase H (143 aa).

S-adenosyl-L-methionine contacts are provided by leucine 68 and glycine 95.

This sequence belongs to the RNA methyltransferase RlmH family. Homodimer.

The protein resides in the cytoplasm. The catalysed reaction is pseudouridine(1915) in 23S rRNA + S-adenosyl-L-methionine = N(3)-methylpseudouridine(1915) in 23S rRNA + S-adenosyl-L-homocysteine + H(+). In terms of biological role, specifically methylates the pseudouridine at position 1915 (m3Psi1915) in 23S rRNA. The sequence is that of Ribosomal RNA large subunit methyltransferase H from Mycoplasma mobile (strain ATCC 43663 / 163K / NCTC 11711) (Mesomycoplasma mobile).